We begin with the raw amino-acid sequence, 213 residues long: Orotate phosphoribosyltransferase (213 aa).

Lysine 26 contacts 5-phospho-alpha-D-ribose 1-diphosphate. 34–35 contacts orotate; it reads FF. 5-phospho-alpha-D-ribose 1-diphosphate-binding positions include 72–73, arginine 99, lysine 100, lysine 103, histidine 105, and 124–132; these read YK and DDVITAGTA. Positions 128 and 156 each coordinate orotate.

It belongs to the purine/pyrimidine phosphoribosyltransferase family. PyrE subfamily. Homodimer. The cofactor is Mg(2+).

It carries out the reaction orotidine 5'-phosphate + diphosphate = orotate + 5-phospho-alpha-D-ribose 1-diphosphate. The protein operates within pyrimidine metabolism; UMP biosynthesis via de novo pathway; UMP from orotate: step 1/2. Its function is as follows. Catalyzes the transfer of a ribosyl phosphate group from 5-phosphoribose 1-diphosphate to orotate, leading to the formation of orotidine monophosphate (OMP). The chain is Orotate phosphoribosyltransferase from Shigella flexneri.